Consider the following 1886-residue polypeptide: Nuclear pore membrane glycoprotein 210 (1886 aa).

Residues 1-25 form the signal peptide; sequence MARASLIQPGLWALLLLQAVGPAVA. Over 26 to 1805 the chain is Perinuclear space; the sequence is AKLNIPKVLL…GASLLSHFLD (1780 aa). N337, N484, N681, and N1039 each carry an N-linked (GlcNAc...) asparagine glycan. One can recognise a BIG2 domain in the interval 1078–1151; it reads FPPFRLIPRK…VQAVDAETGK (74 aa). A helical transmembrane segment spans residues 1806–1828; the sequence is SYQVMFFTFFALLAGTAVTIIAY. At 1829–1886 the chain is on the cytoplasmic side; it reads HTVCAPRELASPLALTPHASPQHSPHYLASSPTAFNTLPSDRKASPPSGLWSPAYASH. The residue at position 1839 (S1839) is a Phosphoserine. Phosphothreonine is present on T1844. A disordered region spans residues 1866-1886; sequence LPSDRKASPPSGLWSPAYASH. Phosphoserine occurs at positions 1873, 1876, 1880, and 1885.

Belongs to the NUP210 family. Forms dimers and possibly higher-order oligomers. Post-translationally, N-glycosylated, but not all potential glycosylation sites may be used. Contains high-mannose type oligosaccharides. In terms of processing, phosphorylated at Ser-1880 in mitosis specifically; not phosphorylated in interphase.

Its subcellular location is the nucleus. It is found in the nuclear pore complex. The protein resides in the nucleus membrane. It localises to the endoplasmic reticulum membrane. Functionally, nucleoporin essential for nuclear pore assembly and fusion, nuclear pore spacing, as well as structural integrity. This Rattus norvegicus (Rat) protein is Nuclear pore membrane glycoprotein 210 (Nup210).